The primary structure comprises 45 residues: DVCDSLVGGRCIHNGCYCERDAPNGNCCNTDGCTARWWCPGTKWD.

Disulfide bonds link Cys3/Cys16, Cys11/Cys28, Cys18/Cys33, and Cys27/Cys39. Position 23 is a 4-hydroxyproline (Pro23). 2 positions are modified to 6'-bromotryptophan: Trp37 and Trp38. Position 40 is a 4-hydroxyproline (Pro40). Trp44 carries the post-translational modification 6'-bromotryptophan.

Expressed by the venom duct.

The protein localises to the secreted. Mu-conotoxins block voltage-gated sodium channels. This toxin reversibly blocks voltage-gated sodium channel in cephalopods, with no alteration in the voltage dependence of sodium conductance or on the kinetics of inactivation. In Californiconus californicus (California cone), this protein is Mu-conotoxin-like Cal 12.1.2c.